We begin with the raw amino-acid sequence, 287 residues long: Nucleotide-binding protein HD_0584 (287 aa).

8–15 (GRSGSGKS) serves as a coordination point for ATP. 56-59 (DIRN) lines the GTP pocket.

It belongs to the RapZ-like family.

Functionally, displays ATPase and GTPase activities. In Haemophilus ducreyi (strain 35000HP / ATCC 700724), this protein is Nucleotide-binding protein HD_0584.